A 241-amino-acid polypeptide reads, in one-letter code: MSNILKIFVDGLWKKNSSLVQLLGLCPVLAITVNAINAIGLGLATTLVLICSNATISLIKNNIQKDFRIPIYIIIISSVVSSIDLVIKAYAFNLYQSLGIFIPLIITNCIVCNRADLIAVHNSVLVSILDGLSIGLGSTLTMFLLGSIREIIGHGTLFFGIEHVLGESFRFLYIEVLDKNSVFLLFAFPSGAFMILGIVLAGKNFLDEVLGIIEHKNVCVCSNKVLVYKDGNKKIESQKSL.

6 helical membrane-spanning segments follow: residues 22-42 (LLGL…IGLG), 69-89 (IPIY…VIKA), 91-111 (AFNL…NCIV), 124-144 (VLVS…TMFL), 157-177 (LFFG…IEVL), and 182-202 (VFLL…VLAG).

It belongs to the NqrDE/RnfAE family. The complex is composed of six subunits: RnfA, RnfB, RnfC, RnfD, RnfE and RnfG.

It is found in the cell inner membrane. Functionally, part of a membrane-bound complex that couples electron transfer with translocation of ions across the membrane. This is Ion-translocating oxidoreductase complex subunit E from Buchnera aphidicola subsp. Baizongia pistaciae (strain Bp).